We begin with the raw amino-acid sequence, 209 residues long: Large ribosomal subunit protein uL4 (209 aa).

The interval 46–71 (GTSSTKTRSEVRGSSKKPWKQKGTGR) is disordered. The segment covering 59–71 (SSKKPWKQKGTGR) has biased composition (basic residues).

The protein belongs to the universal ribosomal protein uL4 family. As to quaternary structure, part of the 50S ribosomal subunit.

In terms of biological role, one of the primary rRNA binding proteins, this protein initially binds near the 5'-end of the 23S rRNA. It is important during the early stages of 50S assembly. It makes multiple contacts with different domains of the 23S rRNA in the assembled 50S subunit and ribosome. Functionally, forms part of the polypeptide exit tunnel. The polypeptide is Large ribosomal subunit protein uL4 (Borrelia garinii subsp. bavariensis (strain ATCC BAA-2496 / DSM 23469 / PBi) (Borreliella bavariensis)).